A 125-amino-acid chain; its full sequence is UPF0332 protein AF_0298 (125 aa).

It belongs to the UPF0332 family.

This Archaeoglobus fulgidus (strain ATCC 49558 / DSM 4304 / JCM 9628 / NBRC 100126 / VC-16) protein is UPF0332 protein AF_0298.